We begin with the raw amino-acid sequence, 312 residues long: Porphobilinogen deaminase (312 aa).

Cysteine 243 bears the S-(dipyrrolylmethanemethyl)cysteine mark.

Belongs to the HMBS family. In terms of assembly, monomer. Requires dipyrromethane as cofactor.

It carries out the reaction 4 porphobilinogen + H2O = hydroxymethylbilane + 4 NH4(+). It participates in porphyrin-containing compound metabolism; protoporphyrin-IX biosynthesis; coproporphyrinogen-III from 5-aminolevulinate: step 2/4. Functionally, tetrapolymerization of the monopyrrole PBG into the hydroxymethylbilane pre-uroporphyrinogen in several discrete steps. The sequence is that of Porphobilinogen deaminase from Vibrio parahaemolyticus serotype O3:K6 (strain RIMD 2210633).